Reading from the N-terminus, the 641-residue chain is FACT complex subunit SSRP1-A (641 aa).

Positions 459–561 (TDDDAVDPHL…DPNAPKRAMT (103 aa)) are disordered. Acidic residues predominate over residues 476-487 (GDEESDEEDEDF). Over residues 512–524 (GGEKEKLSKKEAS) the composition is skewed to basic and acidic residues. A DNA-binding region (HMG box) is located at residues 556–624 (PKRAMTPFMY…RYEKESAVYR (69 aa)).

This sequence belongs to the SSRP1 family. Component of the FACT complex, a stable heterodimer of SPT16 and SSRP1.

It localises to the nucleus. Its subcellular location is the chromosome. Its function is as follows. Component of the FACT complex, a general chromatin factor that acts to reorganize nucleosomes. The FACT complex is involved in multiple processes that require DNA as a template such as mRNA elongation, DNA replication and DNA repair. During transcription elongation the FACT complex acts as a histone chaperone that both destabilizes and restores nucleosomal structure. It facilitates the passage of RNA polymerase II and transcription by promoting the dissociation of one histone H2A-H2B dimer from the nucleosome, then subsequently promotes the reestablishment of the nucleosome following the passage of RNA polymerase II. Binds specifically to double-stranded DNA. This is FACT complex subunit SSRP1-A (SSRP1-A) from Oryza sativa subsp. japonica (Rice).